The primary structure comprises 406 residues: Elongation factor Tu (406 aa).

Positions 10 to 215 (KPHVNVGTIG…AIDEYIPTPV (206 aa)) constitute a tr-type G domain. The interval 19–26 (GHVDHGKT) is G1. 19-26 (GHVDHGKT) is a binding site for GTP. Thr-26 is a binding site for Mg(2+). Positions 61 to 65 (GITIN) are G2. Residues 82–85 (DCPG) are G3. Residues 82–86 (DCPGH) and 137–140 (NKVD) each bind GTP. Residues 137–140 (NKVD) form a G4 region. The segment at 175–177 (SAL) is G5.

It belongs to the TRAFAC class translation factor GTPase superfamily. Classic translation factor GTPase family. EF-Tu/EF-1A subfamily. In terms of assembly, monomer.

The protein localises to the cytoplasm. It catalyses the reaction GTP + H2O = GDP + phosphate + H(+). Its function is as follows. GTP hydrolase that promotes the GTP-dependent binding of aminoacyl-tRNA to the A-site of ribosomes during protein biosynthesis. This chain is Elongation factor Tu, found in Thermus aquaticus.